The chain runs to 607 residues: Elongation factor 4 (607 aa).

The tr-type G domain maps to 11–193 (ENIRNFSIIA…KIVEVVPAPD (183 aa)). GTP is bound by residues 23–28 (DHGKST) and 140–143 (NKID).

This sequence belongs to the TRAFAC class translation factor GTPase superfamily. Classic translation factor GTPase family. LepA subfamily.

The protein localises to the cell membrane. The catalysed reaction is GTP + H2O = GDP + phosphate + H(+). In terms of biological role, required for accurate and efficient protein synthesis under certain stress conditions. May act as a fidelity factor of the translation reaction, by catalyzing a one-codon backward translocation of tRNAs on improperly translocated ribosomes. Back-translocation proceeds from a post-translocation (POST) complex to a pre-translocation (PRE) complex, thus giving elongation factor G a second chance to translocate the tRNAs correctly. Binds to ribosomes in a GTP-dependent manner. The chain is Elongation factor 4 from Staphylococcus aureus (strain USA300).